We begin with the raw amino-acid sequence, 269 residues long: MTNRYTTLFANLEKRNEGAFIPFVTIGDPNKALSFEIIDTLVSSGADALELGIPFSDHLADGPTIQEANIRALESGITPKDCFDILTKIRAKYPHIPIGLLLYANLVYANGIENFYQKCLDAGVDSILIADVPAHESKEFRDIAKKVGIAQIFIAPPDASESTLKQISKLGSGYTYLLSRVGVTGTETAANMPVEDVLAKLREYNAPKPVLGFGISKPEQVQQAIKAGAAGAISGSATVKIIQNNISNKQKMLNELTYFVKEMKAATLN.

Catalysis depends on proton acceptor residues Glu-50 and Asp-61.

It belongs to the TrpA family. In terms of assembly, tetramer of two alpha and two beta chains.

It carries out the reaction (1S,2R)-1-C-(indol-3-yl)glycerol 3-phosphate + L-serine = D-glyceraldehyde 3-phosphate + L-tryptophan + H2O. The protein operates within amino-acid biosynthesis; L-tryptophan biosynthesis; L-tryptophan from chorismate: step 5/5. The alpha subunit is responsible for the aldol cleavage of indoleglycerol phosphate to indole and glyceraldehyde 3-phosphate. The chain is Tryptophan synthase alpha chain from Francisella tularensis subsp. holarctica (strain FTNF002-00 / FTA).